A 279-amino-acid polypeptide reads, in one-letter code: MGIKKYKPTTNGRRNMTASDFSEITKTKPEKSLLDSQSHTAGRNSYGHITVRHRGGGHKQQYRLVDFKRIKDEVPATVKAIEYDPNRTANIALLVYADGVKSYILAPKGLEVGMQVQSGAEADIKVGNALPLTNIPVGTVIHNIELKPGKGGQLARSAGTSAQLLGKEGKYAIVRLSSGEVRLVLLTSRATIGTVGNEQHELINSGKAGRTRWQGKRPTVRGSVMNPNDHPHGGGEGKAPIGHPSPMSPWGKKTLGKKTRNKKARSNKLIVRGRRPGKH.

2 disordered regions span residues 1–43 (MGIK…TAGR) and 207–279 (KAGR…PGKH). The segment covering 8 to 22 (PTTNGRRNMTASDFS) has biased composition (polar residues). Residues 23–33 (EITKTKPEKSL) are compositionally biased toward basic and acidic residues. Residues 34 to 43 (LDSQSHTAGR) show a composition bias toward polar residues. Basic residues-rich tracts occupy residues 209-219 (GRTRWQGKRPT) and 254-279 (TLGK…PGKH).

Belongs to the universal ribosomal protein uL2 family. In terms of assembly, part of the 50S ribosomal subunit. Forms a bridge to the 30S subunit in the 70S ribosome.

Functionally, one of the primary rRNA binding proteins. Required for association of the 30S and 50S subunits to form the 70S ribosome, for tRNA binding and peptide bond formation. It has been suggested to have peptidyltransferase activity; this is somewhat controversial. Makes several contacts with the 16S rRNA in the 70S ribosome. The sequence is that of Large ribosomal subunit protein uL2 from Lactiplantibacillus plantarum (strain ATCC BAA-793 / NCIMB 8826 / WCFS1) (Lactobacillus plantarum).